The following is a 131-amino-acid chain: Large ribosomal subunit protein bL19 (131 aa).

This sequence belongs to the bacterial ribosomal protein bL19 family.

Functionally, this protein is located at the 30S-50S ribosomal subunit interface and may play a role in the structure and function of the aminoacyl-tRNA binding site. This is Large ribosomal subunit protein bL19 from Afipia carboxidovorans (strain ATCC 49405 / DSM 1227 / KCTC 32145 / OM5) (Oligotropha carboxidovorans).